The sequence spans 459 residues: Disease resistance protein CHL1 (459 aa).

One can recognise a TIR domain in the interval 16 to 170 (REVDVFLSFC…QIARDISLVV (155 aa)). Glu-89 is an active-site residue. Residues 191–401 (VYDLLALEVN…LLKLKAKQGG (211 aa)) enclose the NB-ARC domain. Over residues 429 to 440 (ERKESSQDKSQQ) the composition is skewed to basic and acidic residues. The disordered stretch occupies residues 429 to 459 (ERKESSQDKSQQESEVAADILIGKESSQDKQ).

As to expression, mostly expressed in leaves, stems and roots, and, to a lower extent, in flowers and siliques.

The protein resides in the cytoplasm. The enzyme catalyses NAD(+) + H2O = ADP-D-ribose + nicotinamide + H(+). In terms of biological role, confers resistance to low temperatures by limiting chloroplast damage and cell death, thus maintaining growth homeostasis. This Arabidopsis thaliana (Mouse-ear cress) protein is Disease resistance protein CHL1.